Here is a 317-residue protein sequence, read N- to C-terminus: Regulator of microtubule dynamics protein 1 (317 aa).

K168 is modified (N6-succinyllysine). 2 TPR repeats span residues 171–207 (AICI…NPKD) and 225–261 (PWYQ…DPNF).

The protein belongs to the RMDN family. In terms of assembly, interacts with microtubules.

Its subcellular location is the cytoplasm. The protein localises to the cytoskeleton. The protein resides in the spindle. It localises to the spindle pole. In Bos taurus (Bovine), this protein is Regulator of microtubule dynamics protein 1 (RMDN1).